The chain runs to 318 residues: UDP-N-acetylenolpyruvoylglucosamine reductase (318 aa).

The region spanning 38 to 204 (IGGICPVVVE…LGIEILLKEG (167 aa)) is the FAD-binding PCMH-type domain. Arg182 is an active-site residue. Residues 212 to 232 (SLKDKRDRRNSSQPENKKSAG) form a disordered region. Residues 213-229 (LKDKRDRRNSSQPENKK) are compositionally biased toward basic and acidic residues. The active-site Proton donor is the Ser233. Residue Glu310 is part of the active site.

Belongs to the MurB family. The cofactor is FAD.

It localises to the cytoplasm. The enzyme catalyses UDP-N-acetyl-alpha-D-muramate + NADP(+) = UDP-N-acetyl-3-O-(1-carboxyvinyl)-alpha-D-glucosamine + NADPH + H(+). The protein operates within cell wall biogenesis; peptidoglycan biosynthesis. Its function is as follows. Cell wall formation. In Leptospira borgpetersenii serovar Hardjo-bovis (strain JB197), this protein is UDP-N-acetylenolpyruvoylglucosamine reductase.